A 225-amino-acid polypeptide reads, in one-letter code: NAD(P)H-quinone oxidoreductase subunit K, chloroplastic (225 aa).

Residues cysteine 43, cysteine 44, cysteine 108, and cysteine 139 each coordinate [4Fe-4S] cluster.

The protein belongs to the complex I 20 kDa subunit family. As to quaternary structure, NDH is composed of at least 16 different subunits, 5 of which are encoded in the nucleus. The cofactor is [4Fe-4S] cluster.

The protein localises to the plastid. It localises to the chloroplast thylakoid membrane. The catalysed reaction is a plastoquinone + NADH + (n+1) H(+)(in) = a plastoquinol + NAD(+) + n H(+)(out). It carries out the reaction a plastoquinone + NADPH + (n+1) H(+)(in) = a plastoquinol + NADP(+) + n H(+)(out). In terms of biological role, NDH shuttles electrons from NAD(P)H:plastoquinone, via FMN and iron-sulfur (Fe-S) centers, to quinones in the photosynthetic chain and possibly in a chloroplast respiratory chain. The immediate electron acceptor for the enzyme in this species is believed to be plastoquinone. Couples the redox reaction to proton translocation, and thus conserves the redox energy in a proton gradient. This chain is NAD(P)H-quinone oxidoreductase subunit K, chloroplastic, found in Helianthus annuus (Common sunflower).